Consider the following 165-residue polypeptide: Regulatory protein RecX (165 aa).

This sequence belongs to the RecX family.

The protein localises to the cytoplasm. Functionally, modulates RecA activity. This chain is Regulatory protein RecX, found in Cronobacter sakazakii (strain ATCC BAA-894) (Enterobacter sakazakii).